A 257-amino-acid chain; its full sequence is NAD-capped RNA hydrolase NudC (257 aa).

Arg-69 lines the substrate pocket. The Zn(2+) site is built by Cys-98 and Cys-101. Glu-111 contacts substrate. Zn(2+) contacts are provided by Cys-116 and Cys-119. Tyr-124 contributes to the substrate binding site. The Nudix hydrolase domain occupies Pro-125 to Thr-248. Residues Ala-158, Glu-174, and Glu-178 each contribute to the a divalent metal cation site. The Nudix box signature appears at Gly-159 to Gly-180. Gln-192–Ser-199 provides a ligand contact to substrate. Glu-219 contacts a divalent metal cation. A substrate-binding site is contributed by Ala-241.

Belongs to the Nudix hydrolase family. NudC subfamily. Homodimer. The cofactor is Mg(2+). It depends on Mn(2+) as a cofactor. Requires Zn(2+) as cofactor.

It carries out the reaction a 5'-end NAD(+)-phospho-ribonucleoside in mRNA + H2O = a 5'-end phospho-adenosine-phospho-ribonucleoside in mRNA + beta-nicotinamide D-ribonucleotide + 2 H(+). The enzyme catalyses NAD(+) + H2O = beta-nicotinamide D-ribonucleotide + AMP + 2 H(+). The catalysed reaction is NADH + H2O = reduced beta-nicotinamide D-ribonucleotide + AMP + 2 H(+). MRNA decapping enzyme that specifically removes the nicotinamide adenine dinucleotide (NAD) cap from a subset of mRNAs by hydrolyzing the diphosphate linkage to produce nicotinamide mononucleotide (NMN) and 5' monophosphate mRNA. The NAD-cap is present at the 5'-end of some mRNAs and stabilizes RNA against 5'-processing. Has preference for mRNAs with a 5'-end purine. Catalyzes the hydrolysis of a broad range of dinucleotide pyrophosphates. The sequence is that of NAD-capped RNA hydrolase NudC from Salmonella choleraesuis (strain SC-B67).